The chain runs to 154 residues: Ribosome maturation factor RimP (154 aa).

The protein belongs to the RimP family.

The protein localises to the cytoplasm. In terms of biological role, required for maturation of 30S ribosomal subunits. This Finegoldia magna (strain ATCC 29328 / DSM 20472 / WAL 2508) (Peptostreptococcus magnus) protein is Ribosome maturation factor RimP.